We begin with the raw amino-acid sequence, 188 residues long: Dual specificity protein phosphatase 18 (188 aa).

The Tyrosine-protein phosphatase domain maps to 19–160 (GLSQITKSLF…LIHYELQLFG (142 aa)). The tract at residues 95–141 (MQKGRTLLHCAAGVSRSAALCLAYLMKYHAMSLVDAHTWTKSCRPII) is sufficient for mitochondrial localization. Cys104 acts as the Phosphocysteine intermediate in catalysis.

The protein belongs to the protein-tyrosine phosphatase family. Non-receptor class dual specificity subfamily.

The protein localises to the cytoplasm. It localises to the nucleus. It is found in the mitochondrion inner membrane. It carries out the reaction O-phospho-L-tyrosyl-[protein] + H2O = L-tyrosyl-[protein] + phosphate. The enzyme catalyses O-phospho-L-seryl-[protein] + H2O = L-seryl-[protein] + phosphate. It catalyses the reaction O-phospho-L-threonyl-[protein] + H2O = L-threonyl-[protein] + phosphate. Its function is as follows. Can dephosphorylate single and diphosphorylated synthetic MAPK peptides, with preference for the phosphotyrosine and diphosphorylated forms over phosphothreonine. In vitro, dephosphorylates p-nitrophenyl phosphate (pNPP). In Mus musculus (Mouse), this protein is Dual specificity protein phosphatase 18 (Dusp18).